The chain runs to 227 residues: Esterase Rv3036c (227 aa).

The chain crosses the membrane as a helical span at residues 3 to 23 (YLIATAVLVAVVLVGWPAAGA).

This sequence belongs to the RsiV family.

The protein localises to the cell membrane. Its subcellular location is the secreted. It localises to the cell wall. It catalyses the reaction a fatty acid ester + H2O = an aliphatic alcohol + a fatty acid + H(+). The catalysed reaction is an acetyl ester + H2O = an aliphatic alcohol + acetate + H(+). The enzyme catalyses a butanoate ester + H2O = an aliphatic alcohol + butanoate + H(+). It carries out the reaction a hexanoate ester + H2O = an aliphatic alcohol + hexanoate + H(+). It catalyses the reaction a dodecanoate ester + H2O = an aliphatic alcohol + dodecanoate + H(+). The catalysed reaction is a tetradecanoate ester + H2O = an aliphatic alcohol + tetradecanoate + H(+). The enzyme catalyses an octanoate ester + H2O = an aliphatic alcohol + octanoate + H(+). In terms of biological role, hydrolyzes ester substrates carbon chain lengths ranging from C2 to C14. In vitro, acetate (C2), butyrate (C4) and caprylate (C6) are hydrolyzed with high efficiency. Has lower activity against laurate (C12), myristate (C14) and caproate (C8), and weak activity against palmitate (C16). The polypeptide is Esterase Rv3036c (Mycobacterium tuberculosis (strain ATCC 25618 / H37Rv)).